Consider the following 175-residue polypeptide: Ribosome maturation factor RimM (175 aa).

The PRC barrel domain occupies 99-172; that stretch reads ADEYHVSDLI…RLEVDAPPGL (74 aa).

It belongs to the RimM family. In terms of assembly, binds ribosomal protein uS19.

Its subcellular location is the cytoplasm. An accessory protein needed during the final step in the assembly of 30S ribosomal subunit, possibly for assembly of the head region. Essential for efficient processing of 16S rRNA. May be needed both before and after RbfA during the maturation of 16S rRNA. It has affinity for free ribosomal 30S subunits but not for 70S ribosomes. The chain is Ribosome maturation factor RimM from Picosynechococcus sp. (strain ATCC 27264 / PCC 7002 / PR-6) (Agmenellum quadruplicatum).